The following is a 232-amino-acid chain: Vesicle transport through interaction with t-SNAREs homolog 1B (232 aa).

Position 2 is an N-acetylalanine (Ala2). Interaction with CLINT1 stretches follow at residues Ala2–Glu23 and Ala69–Phe73. Residues Ala2–Leu208 are Cytoplasmic-facing. A coiled-coil region spans residues Thr35–Thr98. A Phosphothreonine modification is found at Thr103. Arg107 is modified (omega-N-methylarginine). A Phosphoserine modification is found at Ser138. A coiled-coil region spans residues Ser161–Met198. Residues Leu209–Phe229 traverse the membrane as a helical; Anchor for type IV membrane protein segment. At Arg230–His232 the chain is on the vesicular side.

This sequence belongs to the VTI1 family. Forms a SNARE complex with STX7, STX8 and VAMP8 which functions in the homotypic fusion of late endosomes. Component of the SNARE complex composed of STX7, STX8, VAMP7 and VIT1B that is required for heterotypic fusion of late endosomes with lysosomes. May interact with STX17. Interacts with CLINT1. Expressed in all tissues examined.

The protein localises to the early endosome membrane. The protein resides in the late endosome membrane. It localises to the lysosome membrane. Its subcellular location is the cytoplasmic granule. It is found in the recycling endosome membrane. In terms of biological role, V-SNARE that mediates vesicle transport pathways through interactions with t-SNAREs on the target membrane. These interactions are proposed to mediate aspects of the specificity of vesicle trafficking and to promote fusion of the lipid bilayers. May be concerned with increased secretion of cytokines associated with cellular senescence. In Homo sapiens (Human), this protein is Vesicle transport through interaction with t-SNAREs homolog 1B (VTI1B).